A 115-amino-acid polypeptide reads, in one-letter code: U3-lycotoxin-Ls1j (115 aa).

Residues 1 to 20 (MKFVLLFGVFLVTLFSYSSA) form the signal peptide. The propeptide occupies 21 to 44 (EMLDDFDQADEDELLSLIEKEEAR). Intrachain disulfides connect Cys48/Cys63, Cys55/Cys72, Cys62/Cys87, and Cys74/Cys85.

Belongs to the neurotoxin 19 (CSTX) family. 01 subfamily. In terms of tissue distribution, expressed by the venom gland.

It is found in the secreted. This is U3-lycotoxin-Ls1j from Lycosa singoriensis (Wolf spider).